The chain runs to 46 residues: uncharacterized protein (46 aa).

The protein to equivalent protein in phage 82.

This is an uncharacterized protein from Escherichia coli (strain K12).